The primary structure comprises 350 residues: uncharacterized protein (350 aa).

The signal sequence occupies residues 1-27; that stretch reads MKNKKRVLIASSLSCAILLLSAATTQA. Residues 28–71 are disordered; that stretch reads NSAHKDSQDQNKKEHVDKSQQKEKRNVTNKDKNSTVPDDIGKNG. The segment covering 30–60 has biased composition (basic and acidic residues); that stretch reads AHKDSQDQNKKEHVDKSQQKEKRNVTNKDKN.

It belongs to the aerolysin family.

This is an uncharacterized protein from Staphylococcus aureus (strain MSSA476).